The sequence spans 484 residues: Aspartyl/glutamyl-tRNA(Asn/Gln) amidotransferase subunit B (484 aa).

Belongs to the GatB/GatE family. GatB subfamily. Heterotrimer of A, B and C subunits.

The catalysed reaction is L-glutamyl-tRNA(Gln) + L-glutamine + ATP + H2O = L-glutaminyl-tRNA(Gln) + L-glutamate + ADP + phosphate + H(+). It carries out the reaction L-aspartyl-tRNA(Asn) + L-glutamine + ATP + H2O = L-asparaginyl-tRNA(Asn) + L-glutamate + ADP + phosphate + 2 H(+). Allows the formation of correctly charged Asn-tRNA(Asn) or Gln-tRNA(Gln) through the transamidation of misacylated Asp-tRNA(Asn) or Glu-tRNA(Gln) in organisms which lack either or both of asparaginyl-tRNA or glutaminyl-tRNA synthetases. The reaction takes place in the presence of glutamine and ATP through an activated phospho-Asp-tRNA(Asn) or phospho-Glu-tRNA(Gln). The protein is Aspartyl/glutamyl-tRNA(Asn/Gln) amidotransferase subunit B of Anaeromyxobacter sp. (strain K).